Here is a 365-residue protein sequence, read N- to C-terminus: Phosphoserine aminotransferase (365 aa).

An L-glutamate-binding site is contributed by arginine 40. Pyridoxal 5'-phosphate contacts are provided by residues 74-75, phenylalanine 99, threonine 155, aspartate 177, and glutamine 200; that span reads AS. Lysine 201 is subject to N6-(pyridoxal phosphate)lysine. Position 241 to 242 (241 to 242) interacts with pyridoxal 5'-phosphate; that stretch reads NT.

The protein belongs to the class-V pyridoxal-phosphate-dependent aminotransferase family. SerC subfamily. In terms of assembly, homodimer. Pyridoxal 5'-phosphate serves as cofactor.

The protein localises to the cytoplasm. The catalysed reaction is O-phospho-L-serine + 2-oxoglutarate = 3-phosphooxypyruvate + L-glutamate. It carries out the reaction 4-(phosphooxy)-L-threonine + 2-oxoglutarate = (R)-3-hydroxy-2-oxo-4-phosphooxybutanoate + L-glutamate. It functions in the pathway amino-acid biosynthesis; L-serine biosynthesis; L-serine from 3-phospho-D-glycerate: step 2/3. Its function is as follows. Catalyzes the reversible conversion of 3-phosphohydroxypyruvate to phosphoserine and of 3-hydroxy-2-oxo-4-phosphonooxybutanoate to phosphohydroxythreonine. This is Phosphoserine aminotransferase from Lactococcus lactis subsp. cremoris (strain SK11).